Consider the following 220-residue polypeptide: 3-dehydroquinate dehydratase (220 aa).

3-dehydroquinate contacts are provided by residues 29 to 31 (EFR) and R56. The Proton donor/acceptor role is filled by H116. Residue K142 is the Schiff-base intermediate with substrate of the active site. The 3-dehydroquinate site is built by R180, S200, and Q204.

The protein belongs to the type-I 3-dehydroquinase family. In terms of assembly, homodimer.

It catalyses the reaction 3-dehydroquinate = 3-dehydroshikimate + H2O. It participates in metabolic intermediate biosynthesis; chorismate biosynthesis; chorismate from D-erythrose 4-phosphate and phosphoenolpyruvate: step 3/7. Involved in the third step of the chorismate pathway, which leads to the biosynthesis of aromatic amino acids. Catalyzes the cis-dehydration of 3-dehydroquinate (DHQ) and introduces the first double bond of the aromatic ring to yield 3-dehydroshikimate. The protein is 3-dehydroquinate dehydratase of Methanocaldococcus jannaschii (strain ATCC 43067 / DSM 2661 / JAL-1 / JCM 10045 / NBRC 100440) (Methanococcus jannaschii).